We begin with the raw amino-acid sequence, 254 residues long: Phosphoribosylaminoimidazole-succinocarboxamide synthase (254 aa).

Belongs to the SAICAR synthetase family.

It catalyses the reaction 5-amino-1-(5-phospho-D-ribosyl)imidazole-4-carboxylate + L-aspartate + ATP = (2S)-2-[5-amino-1-(5-phospho-beta-D-ribosyl)imidazole-4-carboxamido]succinate + ADP + phosphate + 2 H(+). Its pathway is purine metabolism; IMP biosynthesis via de novo pathway; 5-amino-1-(5-phospho-D-ribosyl)imidazole-4-carboxamide from 5-amino-1-(5-phospho-D-ribosyl)imidazole-4-carboxylate: step 1/2. The chain is Phosphoribosylaminoimidazole-succinocarboxamide synthase from Bartonella henselae (strain ATCC 49882 / DSM 28221 / CCUG 30454 / Houston 1) (Rochalimaea henselae).